The chain runs to 325 residues: GMP reductase (325 aa).

Cys-174 (thioimidate intermediate) is an active-site residue. An NADP(+)-binding site is contributed by 203–226; that stretch reads IIADGGIRTNGDIAKSIRFGANMV.

Belongs to the IMPDH/GMPR family. GuaC type 2 subfamily.

It carries out the reaction IMP + NH4(+) + NADP(+) = GMP + NADPH + 2 H(+). Catalyzes the irreversible NADPH-dependent deamination of GMP to IMP. It functions in the conversion of nucleobase, nucleoside and nucleotide derivatives of G to A nucleotides, and in maintaining the intracellular balance of A and G nucleotides. The chain is GMP reductase from Latilactobacillus sakei subsp. sakei (strain 23K) (Lactobacillus sakei subsp. sakei).